Consider the following 179-residue polypeptide: Large ribosomal subunit protein uL5 (179 aa).

This sequence belongs to the universal ribosomal protein uL5 family. In terms of assembly, part of the 50S ribosomal subunit; part of the 5S rRNA/L5/L18/L25 subcomplex. Contacts the 5S rRNA and the P site tRNA. Forms a bridge to the 30S subunit in the 70S ribosome.

In terms of biological role, this is one of the proteins that bind and probably mediate the attachment of the 5S RNA into the large ribosomal subunit, where it forms part of the central protuberance. In the 70S ribosome it contacts protein S13 of the 30S subunit (bridge B1b), connecting the 2 subunits; this bridge is implicated in subunit movement. Contacts the P site tRNA; the 5S rRNA and some of its associated proteins might help stabilize positioning of ribosome-bound tRNAs. This chain is Large ribosomal subunit protein uL5, found in Burkholderia mallei (strain ATCC 23344).